Here is a 183-residue protein sequence, read N- to C-terminus: Inosine/xanthosine triphosphatase (183 aa).

The protein belongs to the YjjX NTPase family. Homodimer. Mg(2+) is required as a cofactor. Requires Mn(2+) as cofactor.

It carries out the reaction XTP + H2O = XDP + phosphate + H(+). The enzyme catalyses ITP + H2O = IDP + phosphate + H(+). Its function is as follows. Phosphatase that hydrolyzes non-canonical purine nucleotides such as XTP and ITP to their respective diphosphate derivatives. Probably excludes non-canonical purines from DNA/RNA precursor pool, thus preventing their incorporation into DNA/RNA and avoiding chromosomal lesions. The protein is Inosine/xanthosine triphosphatase of Vibrio cholerae serotype O1 (strain ATCC 39315 / El Tor Inaba N16961).